Consider the following 375-residue polypeptide: Growth/differentiation factor 8 (375 aa).

The first 23 residues, 1–23 (MQKLAVYVYIYLFMQILVHPVAL), serve as a signal peptide directing secretion. Residues 24-266 (DGSSQPTENA…VTDTPKRSRR (243 aa)) constitute a propeptide that is removed on maturation. The N-linked (GlcNAc...) asparagine glycan is linked to N71. 4 cysteine pairs are disulfide-bonded: C272-C282, C281-C340, C309-C372, and C313-C374.

The protein belongs to the TGF-beta family. In terms of assembly, homodimer; disulfide-linked.

It is found in the secreted. Functionally, acts specifically as a negative regulator of skeletal muscle growth. The protein is Growth/differentiation factor 8 (MSTN) of Meleagris gallopavo (Wild turkey).